The sequence spans 131 residues: Steroid Delta-isomerase (131 aa).

Tyr-16 (proton donor) is an active-site residue. Catalysis depends on Asp-40, which acts as the Proton acceptor. Residue Asp-103 coordinates substrate.

Homodimer.

The enzyme catalyses a 3-oxo-Delta(5)-steroid = a 3-oxo-Delta(4)-steroid. This Pseudomonas putida (Arthrobacter siderocapsulatus) protein is Steroid Delta-isomerase (ksi).